A 551-amino-acid polypeptide reads, in one-letter code: Chloride channel CLIC-like protein 1 (551 aa).

A signal peptide spans Met-1–Ala-18. The Lumenal portion of the chain corresponds to His-19–Asn-184. Residues Val-185–Thr-205 form a helical membrane-spanning segment. Topologically, residues Tyr-206–Val-216 are cytoplasmic. The helical transmembrane segment at Leu-217–Phe-237 threads the bilayer. The Lumenal portion of the chain corresponds to Ala-238–Glu-329. A helical transmembrane segment spans residues Ile-330 to Cys-350. Residues Tyr-351–Gly-551 lie on the Cytoplasmic side of the membrane. A disordered region spans residues Ile-363–Thr-415. The span at Arg-380 to Pro-389 shows a compositional bias: basic and acidic residues. Ser-438 and Ser-464 each carry phosphoserine. The segment at Val-447–Gly-551 is disordered. Thr-482 is subject to Phosphothreonine. The span at Thr-488 to Gly-508 shows a compositional bias: polar residues. A phosphoserine mark is found at Ser-509, Ser-524, and Ser-532.

It belongs to the chloride channel MCLC family. In terms of assembly, homomultimers. Interacts with mitochondrial protein PIGBOS1 (via C-terminus); the interaction occurs at the mitochondria-associated endoplasmic reticulum (ER) membrane, a zone of contact between the ER and mitochondrial membranes, but does not appear to play a role in ER-mitochondria tethering and is not affected by ER stress. Interacts with CALR. As to expression, expressed in the retina of the eye, with extensive expression in the lamina cribrosa, optic nerve, ganglion cell layer, inner nuclear layer, outer nuclear layer and retinal pigment epithelium.

The protein resides in the endoplasmic reticulum membrane. It catalyses the reaction chloride(in) = chloride(out). The catalysed reaction is bromide(in) = bromide(out). It carries out the reaction nitrate(in) = nitrate(out). The enzyme catalyses fluoride(in) = fluoride(out). Inhibited by ER lumenal Ca(2+). Anion-selective channel with Ca(2+)-dependent and voltage-independent gating. Permeable to small monovalent anions with selectivity for bromide &gt; chloride &gt; nitrate &gt; fluoride. Operates in the endoplasmic reticulum (ER) membrane where it mediates chloride efflux to compensate for the loss of positive charges from the ER lumen upon Ca(2+) release. Contributes to the maintenance of ER Ca(2+) pools and activation of unfolded protein response to prevent accumulation of misfolded proteins in the ER lumen. Particularly involved in ER homeostasis mechanisms underlying motor neurons and retinal photoreceptors survival. In Homo sapiens (Human), this protein is Chloride channel CLIC-like protein 1.